A 187-amino-acid polypeptide reads, in one-letter code: MNAKTITLKKKRKIKTIVVLSIIMIAALIFTIRLVFYKPFLIEGSSMAPTLKDSERILVDKAVKWTGGFHRGDIIVIHDKKSGRSFVKRLIGLPGDSIKMKNDQLYINDKKVEEPYLKEYKQEVKESGVTLTGDFEVEVPSGKYFVMGDNRLNSLDSRNGMGMPSEDDIIGTESLVFYPFGEMRQAK.

At 1–16 the chain is on the cytoplasmic side; that stretch reads MNAKTITLKKKRKIKT. The helical transmembrane segment at 17 to 37 threads the bilayer; that stretch reads IVVLSIIMIAALIFTIRLVFY. The Extracellular portion of the chain corresponds to 38–187; sequence KPFLIEGSSM…YPFGEMRQAK (150 aa). Residues Ser46 and Lys88 contribute to the active site.

The protein belongs to the peptidase S26 family.

The protein localises to the cell membrane. It catalyses the reaction Cleavage of hydrophobic, N-terminal signal or leader sequences from secreted and periplasmic proteins.. The protein is Signal peptidase I U (sipU) of Bacillus subtilis (strain 168).